A 103-amino-acid polypeptide reads, in one-letter code: uncharacterized protein (103 aa).

2 helical membrane-spanning segments follow: residues 13–33 and 77–97; these read LLPFIFIYLSVANKIMFYCIL and FSIYIYIYFFFYSFLCSPYLF.

It is found in the endoplasmic reticulum membrane. This is an uncharacterized protein from Schizosaccharomyces pombe (strain 972 / ATCC 24843) (Fission yeast).